The following is a 327-amino-acid chain: Cyclic AMP-responsive element-binding protein 1 (327 aa).

Disordered stretches follow at residues 1 to 29 and 94 to 113; these read MTMD…TVQA and SEDS…RREI. In terms of domain architecture, KID spans 8 to 146; sequence DNQQSGDAAV…IEEEKSEEET (139 aa). Positions 20-29 are enriched in polar residues; it reads AESQQMTVQA. At Ser119 the chain carries Phosphoserine; by CaMK1, CaMK2, CaMK4, PKB/AKT1 or PKB/AKT2, RPS6KA3, RPS6KA4, RPS6KA5 and SGK1. Lys122 is covalently cross-linked (Glycyl lysine isopeptide (Lys-Gly) (interchain with G-Cter in SUMO2)). The segment at 126 to 149 is disordered; that stretch reads DLSSDAPGVPRIEEEKSEEETSAP. Ser128 is subject to Phosphoserine; by CaMK2. Ser257 is modified (phosphoserine; by HIPK2). The bZIP domain occupies 269–327; the sequence is ARKREVRLMKNREAARECRRKKKEYVKCLENRVAVLENQNKTLIEELKALKDLYCHKSD. Residues 270–295 form a basic motif region; that stretch reads RKREVRLMKNREAARECRRKKKEYVK. Glycyl lysine isopeptide (Lys-Gly) (interchain with G-Cter in SUMO1) cross-links involve residues Lys271 and Lys290. The leucine-zipper stretch occupies residues 297–318; the sequence is LENRVAVLENQNKTLIEELKAL.

Belongs to the bZIP family. In terms of assembly, interacts with PPRC1. Binds DNA as a dimer. This dimer is stabilized by magnesium ions. Interacts, through the bZIP domain, with the coactivators CRTC1/TORC1, CRTC2/TORC2 and CRTC3/TORC3. When phosphorylated on Ser-119, binds CREBBP. Interacts with CREBL2; regulates CREB1 phosphorylation, stability and transcriptional activity. Interacts (phosphorylated form) with TOX3. Interacts with ARRB1. Binds to HIPK2. Interacts with SGK1. Interacts with TSSK4; this interaction facilitates phosphorylation on Ser-119. Forms a complex with KMT2A and CREBBP. Interacts with TOX4; CREB1 is required for full induction of TOX4-dependent activity and the interaction is increased by cAMP and inhibited by insulin. Phosphorylation of Ser-119 allows CREBBP binding. Stimulated by phosphorylation. Phosphorylation of both Ser-128 and Ser-119 in the SCN regulates the activity of CREB and participate in circadian rhythm generation. Phosphorylated upon calcium influx by CaMK4 and CaMK2 on Ser-119. CaMK4 is much more potent than CaMK2 in activating CREB. Phosphorylated by CaMK2 on Ser-128. Phosphorylation of Ser-128 blocks CREB-mediated transcription even when Ser-119 is phosphorylated. Phosphorylated by CaMK1. Phosphorylation of Ser-257 by HIPK2 in response to genotoxic stress promotes CREB1 activity, facilitating the recruitment of the coactivator CBP. Phosphorylated at Ser-119 by RPS6KA3, RPS6KA4 and RPS6KA5 in response to mitogenic or stress stimuli. CREBL2 positively regulates phosphorylation at Ser-119 thereby stimulating CREB1 transcriptional activity. In liver, phosphorylation is induced by fasting or glucagon in a circadian fashion. Phosphorylated by TSSK4 on Ser-119. In terms of processing, sumoylated with SUMO1. Sumoylation on Lys-290, but not on Lys-271, is required for nuclear localization of this protein. Sumoylation is enhanced under hypoxia, promoting nuclear localization and stabilization.

Its subcellular location is the nucleus. Its function is as follows. Phosphorylation-dependent transcription factor that stimulates transcription upon binding to the DNA cAMP response element (CRE), a sequence present in many viral and cellular promoters. Transcription activation is enhanced by the TORC coactivators which act independently of Ser-119 phosphorylation. Involved in different cellular processes including the synchronization of circadian rhythmicity and the differentiation of adipose cells. Regulates the expression of apoptotic and inflammatory response factors in cardiomyocytes in response to ERFE-mediated activation of AKT signaling. In Rattus norvegicus (Rat), this protein is Cyclic AMP-responsive element-binding protein 1 (Creb1).